A 910-amino-acid chain; its full sequence is Eukaryotic translation initiation factor 3 subunit C (910 aa).

A disordered region spans residues Met1–Gln21. Positions Ser11–Ile20 are enriched in acidic residues. 4 positions are modified to phosphoserine: Ser34, Ser165, Ser176, and Ser185. A disordered region spans residues Phe157–Glu281. Positions Asp162–Asp186 are enriched in acidic residues. Over residues Glu193–Ala207 the composition is skewed to low complexity. Acidic residues predominate over residues Ala209–Asn235. The span at Met240–Val268 shows a compositional bias: basic and acidic residues. The PCI domain occupies Phe639–Pro815. Residues Phe847–Glu910 are disordered. A compositionally biased stretch (low complexity) spans Asn862–Gly874. Residues Arg882–Lys891 are compositionally biased toward basic residues. Positions Asp895–Glu910 are enriched in low complexity.

The protein belongs to the eIF-3 subunit C family. In terms of assembly, component of the eukaryotic translation initiation factor 3 (eIF-3) complex. The eIF-3 complex interacts with pix.

It is found in the cytoplasm. Its function is as follows. Component of the eukaryotic translation initiation factor 3 (eIF-3) complex, which is involved in protein synthesis of a specialized repertoire of mRNAs and, together with other initiation factors, stimulates binding of mRNA and methionyl-tRNAi to the 40S ribosome. The eIF-3 complex specifically targets and initiates translation of a subset of mRNAs involved in cell proliferation. The chain is Eukaryotic translation initiation factor 3 subunit C from Drosophila yakuba (Fruit fly).